The sequence spans 548 residues: Chaperonin GroEL (548 aa).

Residues 30–33, K51, 87–91, G415, and D495 contribute to the ATP site; these read TLGP and DGTTT.

The protein belongs to the chaperonin (HSP60) family. Forms a cylinder of 14 subunits composed of two heptameric rings stacked back-to-back. Interacts with the co-chaperonin GroES.

Its subcellular location is the cytoplasm. It carries out the reaction ATP + H2O + a folded polypeptide = ADP + phosphate + an unfolded polypeptide.. Functionally, together with its co-chaperonin GroES, plays an essential role in assisting protein folding. The GroEL-GroES system forms a nano-cage that allows encapsulation of the non-native substrate proteins and provides a physical environment optimized to promote and accelerate protein folding. This chain is Chaperonin GroEL, found in Erwinia tasmaniensis (strain DSM 17950 / CFBP 7177 / CIP 109463 / NCPPB 4357 / Et1/99).